The following is a 119-amino-acid chain: Phosphoribosyl-AMP cyclohydrolase (119 aa).

Residue Asp77 participates in Mg(2+) binding. A Zn(2+)-binding site is contributed by Cys78. The Mg(2+) site is built by Asp79 and Asp81. Zn(2+) contacts are provided by Cys94 and Cys101.

This sequence belongs to the PRA-CH family. As to quaternary structure, homodimer. It depends on Mg(2+) as a cofactor. Requires Zn(2+) as cofactor.

The protein localises to the cytoplasm. It carries out the reaction 1-(5-phospho-beta-D-ribosyl)-5'-AMP + H2O = 1-(5-phospho-beta-D-ribosyl)-5-[(5-phospho-beta-D-ribosylamino)methylideneamino]imidazole-4-carboxamide. It functions in the pathway amino-acid biosynthesis; L-histidine biosynthesis; L-histidine from 5-phospho-alpha-D-ribose 1-diphosphate: step 3/9. Catalyzes the hydrolysis of the adenine ring of phosphoribosyl-AMP. The sequence is that of Phosphoribosyl-AMP cyclohydrolase from Cereibacter sphaeroides (strain ATCC 17025 / ATH 2.4.3) (Rhodobacter sphaeroides).